A 396-amino-acid polypeptide reads, in one-letter code: NADH-quinone oxidoreductase subunit D (396 aa).

Belongs to the complex I 49 kDa subunit family. In terms of assembly, NDH-1 is composed of 14 different subunits. Subunits NuoB, C, D, E, F, and G constitute the peripheral sector of the complex.

Its subcellular location is the cell inner membrane. The catalysed reaction is a quinone + NADH + 5 H(+)(in) = a quinol + NAD(+) + 4 H(+)(out). In terms of biological role, NDH-1 shuttles electrons from NADH, via FMN and iron-sulfur (Fe-S) centers, to quinones in the respiratory chain. The immediate electron acceptor for the enzyme in this species is believed to be ubiquinone. Couples the redox reaction to proton translocation (for every two electrons transferred, four hydrogen ions are translocated across the cytoplasmic membrane), and thus conserves the redox energy in a proton gradient. This Methylorubrum extorquens (strain PA1) (Methylobacterium extorquens) protein is NADH-quinone oxidoreductase subunit D.